Here is a 363-residue protein sequence, read N- to C-terminus: Zinc phosphodiesterase ELAC protein 1 (363 aa).

Zn(2+) is bound by residues H62, H64, D66, H67, H182, D253, and H313. Catalysis depends on D66, which acts as the Proton acceptor.

The protein belongs to the RNase Z family. In terms of assembly, homodimer. Zn(2+) serves as cofactor. As to expression, widely expressed. Expressed in heart, brain, placenta, lung, liver, skeletal muscle, kidney and pancreas.

It localises to the cytoplasm. Its subcellular location is the cytosol. The protein localises to the nucleus. The catalysed reaction is Endonucleolytic cleavage of RNA, removing extra 3' nucleotides from tRNA precursor, generating 3' termini of tRNAs. A 3'-hydroxy group is left at the tRNA terminus and a 5'-phosphoryl group is left at the trailer molecule.. Its function is as follows. Zinc phosphodiesterase, which displays some tRNA 3'-processing endonuclease activity. Specifically involved in tRNA repair: acts downstream of the ribosome-associated quality control (RQC) pathway by removing a 2',3'-cyclic phosphate from tRNAs following cleavage by ANKZF1. tRNAs are then processed by TRNT1. The polypeptide is Zinc phosphodiesterase ELAC protein 1 (Homo sapiens (Human)).